Consider the following 326-residue polypeptide: Arabinose 5-phosphate isomerase KdsD (326 aa).

In terms of domain architecture, SIS spans 38 to 181 (ACELLLAGKG…AIALLEARGF (144 aa)). Residues 72-73 (GT), His79, His85, 111-120 (TLLPLIKRLG), and 145-147 (SVG) each bind substrate. His79 contributes to the Zn(2+) binding site. 2 consecutive CBS domains span residues 207–265 (MHVG…GIDV) and 274–326 (MTVH…AGVM).

This sequence belongs to the SIS family. GutQ/KpsF subfamily. In terms of assembly, homotetramer.

The catalysed reaction is D-arabinose 5-phosphate = D-ribulose 5-phosphate. It participates in carbohydrate biosynthesis; 3-deoxy-D-manno-octulosonate biosynthesis; 3-deoxy-D-manno-octulosonate from D-ribulose 5-phosphate: step 1/3. Its pathway is bacterial outer membrane biogenesis; lipopolysaccharide biosynthesis. Functionally, involved in the biosynthesis of 3-deoxy-D-manno-octulosonate (KDO), a unique 8-carbon sugar component of lipopolysaccharides (LPSs). Catalyzes the reversible aldol-ketol isomerization between D-ribulose 5-phosphate (Ru5P) and D-arabinose 5-phosphate (A5P). The chain is Arabinose 5-phosphate isomerase KdsD (kdsD) from Pseudomonas aeruginosa (strain ATCC 15692 / DSM 22644 / CIP 104116 / JCM 14847 / LMG 12228 / 1C / PRS 101 / PAO1).